We begin with the raw amino-acid sequence, 43 residues long: uncharacterized protein (43 aa).

This is an uncharacterized protein from Bacillus subtilis (strain 168).